The chain runs to 201 residues: Protein FAR-RED-ELONGATED HYPOCOTYL 1-LIKE (201 aa).

Residues 32 to 35 carry the Nuclear localization sequence (NLS) motif; it reads KKRK. Positions 43-46 match the Nuclear export sequence (NES) motif; the sequence is LLPL.

Belongs to the FHY1 protein family. As to quaternary structure, homodimer and heterodimer with FHY1. Interacts with PHYA, especially upon far-red (FR) light illumination. Binds to LAF1 and HFR1. Inactivated by rapid reversible PHYA-mediated phosphorylation.

It is found in the nucleus. Its subcellular location is the cytoplasm. Functionally, can activate transcription. Essential for light-regulated PHYA nuclear accumulation and subsequent PHYA phototropic signaling processes. PHYA-specific signal transducer in response to continuous FR lights. Mediates the association of PHYA with HFR1 and LAF1 in the nucleus in response to FR conditions. Contributes to inhibition of hypocotyl elongation in continuous blue light (B). This is Protein FAR-RED-ELONGATED HYPOCOTYL 1-LIKE from Arabidopsis thaliana (Mouse-ear cress).